Reading from the N-terminus, the 603-residue chain is DNA mismatch repair protein MutL (603 aa).

Basic and acidic residues predominate over residues 337–347 (ISKKQKEDQKS). The interval 337–383 (ISKKQKEDQKSEQIQMSFEENKPVKETPTLFSKPTIPEYVPSDEDAP) is disordered.

The protein belongs to the DNA mismatch repair MutL/HexB family.

Its function is as follows. This protein is involved in the repair of mismatches in DNA. It is required for dam-dependent methyl-directed DNA mismatch repair. May act as a 'molecular matchmaker', a protein that promotes the formation of a stable complex between two or more DNA-binding proteins in an ATP-dependent manner without itself being part of a final effector complex. This Listeria monocytogenes serotype 4b (strain F2365) protein is DNA mismatch repair protein MutL.